We begin with the raw amino-acid sequence, 196 residues long: Corrinoid adenosyltransferase CobA (196 aa).

Residue 36–42 coordinates ATP; the sequence is GNGKGKT.

Belongs to the Cob(I)alamin adenosyltransferase family. Homodimer.

It is found in the cytoplasm. It catalyses the reaction 2 cob(II)yrinate a,c diamide + reduced [electron-transfer flavoprotein] + 2 ATP = 2 adenosylcob(III)yrinate a,c-diamide + 2 triphosphate + oxidized [electron-transfer flavoprotein] + 3 H(+). The catalysed reaction is 2 cob(II)alamin + reduced [electron-transfer flavoprotein] + 2 ATP = 2 adenosylcob(III)alamin + 2 triphosphate + oxidized [electron-transfer flavoprotein] + 3 H(+). Its pathway is cofactor biosynthesis; adenosylcobalamin biosynthesis; adenosylcobalamin from cob(II)yrinate a,c-diamide: step 2/7. Functionally, required for both de novo synthesis of the corrin ring for the assimilation of exogenous corrinoids. Participates in the adenosylation of a variety of incomplete and complete corrinoids. This is Corrinoid adenosyltransferase CobA (btuR) from Salmonella typhimurium (strain LT2 / SGSC1412 / ATCC 700720).